A 449-amino-acid chain; its full sequence is Tubulin alpha-2 chain (449 aa).

GTP-binding residues include Q11, E71, S140, G144, T145, T179, N206, and N228. E71 is a Mg(2+) binding site. E254 is an active-site residue.

Belongs to the tubulin family. In terms of assembly, dimer of alpha and beta chains. A typical microtubule is a hollow water-filled tube with an outer diameter of 25 nm and an inner diameter of 15 nM. Alpha-beta heterodimers associate head-to-tail to form protofilaments running lengthwise along the microtubule wall with the beta-tubulin subunit facing the microtubule plus end conferring a structural polarity. Microtubules usually have 13 protofilaments but different protofilament numbers can be found in some organisms and specialized cells. It depends on Mg(2+) as a cofactor.

Its subcellular location is the cytoplasm. The protein localises to the cytoskeleton. It catalyses the reaction GTP + H2O = GDP + phosphate + H(+). In terms of biological role, tubulin is the major constituent of microtubules, a cylinder consisting of laterally associated linear protofilaments composed of alpha- and beta-tubulin heterodimers. Microtubules grow by the addition of GTP-tubulin dimers to the microtubule end, where a stabilizing cap forms. Below the cap, tubulin dimers are in GDP-bound state, owing to GTPase activity of alpha-tubulin. This Schizosaccharomyces pombe (strain 972 / ATCC 24843) (Fission yeast) protein is Tubulin alpha-2 chain (tub1).